Here is a 193-residue protein sequence, read N- to C-terminus: Potassium-transporting ATPase KdpC subunit (193 aa).

Residues 7-27 (PALVLFALLSALTGLAYPLAV) form a helical membrane-spanning segment.

It belongs to the KdpC family. As to quaternary structure, the system is composed of three essential subunits: KdpA, KdpB and KdpC.

It localises to the cell inner membrane. Its function is as follows. Part of the high-affinity ATP-driven potassium transport (or Kdp) system, which catalyzes the hydrolysis of ATP coupled with the electrogenic transport of potassium into the cytoplasm. This subunit acts as a catalytic chaperone that increases the ATP-binding affinity of the ATP-hydrolyzing subunit KdpB by the formation of a transient KdpB/KdpC/ATP ternary complex. This is Potassium-transporting ATPase KdpC subunit from Variovorax paradoxus (strain S110).